The primary structure comprises 257 residues: Trans-aconitate 2-methyltransferase (257 aa).

This sequence belongs to the methyltransferase superfamily. Tam family.

Its subcellular location is the cytoplasm. The catalysed reaction is trans-aconitate + S-adenosyl-L-methionine = (E)-3-(methoxycarbonyl)pent-2-enedioate + S-adenosyl-L-homocysteine. In terms of biological role, catalyzes the S-adenosylmethionine monomethyl esterification of trans-aconitate. The polypeptide is Trans-aconitate 2-methyltransferase (Sinorhizobium medicae (strain WSM419) (Ensifer medicae)).